The primary structure comprises 348 residues: RNA 3'-terminal phosphate cyclase (348 aa).

ATP is bound by residues Q107 and 290 to 294 (HLADQ). H316 functions as the Tele-AMP-histidine intermediate in the catalytic mechanism.

The protein belongs to the RNA 3'-terminal cyclase family. Type 1 subfamily.

Its subcellular location is the cytoplasm. It catalyses the reaction a 3'-end 3'-phospho-ribonucleotide-RNA + ATP = a 3'-end 2',3'-cyclophospho-ribonucleotide-RNA + AMP + diphosphate. Catalyzes the conversion of 3'-phosphate to a 2',3'-cyclic phosphodiester at the end of RNA. The mechanism of action of the enzyme occurs in 3 steps: (A) adenylation of the enzyme by ATP; (B) transfer of adenylate to an RNA-N3'P to produce RNA-N3'PP5'A; (C) and attack of the adjacent 2'-hydroxyl on the 3'-phosphorus in the diester linkage to produce the cyclic end product. The biological role of this enzyme is unknown but it is likely to function in some aspects of cellular RNA processing. The polypeptide is RNA 3'-terminal phosphate cyclase (Nostoc punctiforme (strain ATCC 29133 / PCC 73102)).